A 69-amino-acid polypeptide reads, in one-letter code: MSFASTLYKTVFKRNSVFVGTVFASAFVFQAAFDTGVTSWYENHNKGKLWKDIKGGIMNGGEEDEEDDE.

At 1 to 18 (MSFASTLYKTVFKRNSVF) the chain is on the mitochondrial matrix side. Residues 19-44 (VGTVFASAFVFQAAFDTGVTSWYENH) traverse the membrane as a helical segment. At 45 to 69 (NKGKLWKDIKGGIMNGGEEDEEDDE) the chain is on the mitochondrial intermembrane side.

Belongs to the UQCR10/QCR9 family. As to quaternary structure, component of the ubiquinol-cytochrome c oxidoreductase (cytochrome b-c1 complex, complex III, CIII), a multisubunit enzyme composed of 3 respiratory subunits cytochrome b, cytochrome c1 and Rieske protein, 2 core protein subunits, and additional low-molecular weight protein subunits. The complex exists as an obligatory dimer and forms supercomplexes (SCs) in the inner mitochondrial membrane with cytochrome c oxidase (complex IV, CIV).

The protein resides in the mitochondrion inner membrane. Functionally, component of the ubiquinol-cytochrome c oxidoreductase, a multisubunit transmembrane complex that is part of the mitochondrial electron transport chain which drives oxidative phosphorylation. The respiratory chain contains 3 multisubunit complexes succinate dehydrogenase (complex II, CII), ubiquinol-cytochrome c oxidoreductase (cytochrome b-c1 complex, complex III, CIII) and cytochrome c oxidase (complex IV, CIV), that cooperate to transfer electrons derived from NADH and succinate to molecular oxygen, creating an electrochemical gradient over the inner membrane that drives transmembrane transport and the ATP synthase. The cytochrome b-c1 complex catalyzes electron transfer from ubiquinol to cytochrome c, linking this redox reaction to translocation of protons across the mitochondrial inner membrane, with protons being carried across the membrane as hydrogens on the quinol. In the process called Q cycle, 2 protons are consumed from the matrix, 4 protons are released into the intermembrane space and 2 electrons are passed to cytochrome c. This Kluyveromyces lactis (strain ATCC 8585 / CBS 2359 / DSM 70799 / NBRC 1267 / NRRL Y-1140 / WM37) (Yeast) protein is Cytochrome b-c1 complex subunit 9 (QCR9).